A 417-amino-acid chain; its full sequence is Cysteate synthase (417 aa).

Lysine 104 carries the N6-(pyridoxal phosphate)lysine modification. Residues asparagine 131 and threonine 371 each contribute to the pyridoxal 5'-phosphate site.

Belongs to the threonine synthase family. Cysteate synthase subfamily. In terms of assembly, homotrimer. Pyridoxal 5'-phosphate is required as a cofactor.

The catalysed reaction is O-phospho-L-serine + sulfite + H(+) = L-cysteate + phosphate. It participates in cofactor biosynthesis; coenzyme M biosynthesis. In terms of biological role, specifically catalyzes the beta-elimination of phosphate from L-phosphoserine and the beta-addition of sulfite to the dehydroalanine intermediate to produce L-cysteate. This Methanococcoides burtonii (strain DSM 6242 / NBRC 107633 / OCM 468 / ACE-M) protein is Cysteate synthase.